The sequence spans 258 residues: RBPJ-interacting and tubulin-associated protein 1 (258 aa).

Disordered regions lie at residues 28 to 86 (FGSP…PRKK), 132 to 182 (TPPA…APRS), and 195 to 258 (AVPS…PPWK). The span at 71-81 (SPSSRGSTPNL) shows a compositional bias: polar residues. The short motif at 81–97 (LTPRKKNKYRLIGHTPS) is the Nuclear localization signal element. The interaction with RBPJ/RBPSUH stretch occupies residues 117–145 (RTAVEDAAKLRTLFWTPPATPRGSHSPRP). The tract at residues 145–258 (PRETPLRAIH…CPQKPKPPWK (114 aa)) is interaction with tubulin. Composition is skewed to polar residues over residues 201 to 212 (HPASTAPQTNGP) and 236 to 245 (GSVSGPTTPQ).

Belongs to the RITA family. In terms of assembly, interacts with RBPJ/RBPSUH.

Its subcellular location is the cytoplasm. It is found in the nucleus. It localises to the cytoskeleton. The protein localises to the microtubule organizing center. The protein resides in the centrosome. Its function is as follows. Tubulin-binding protein that acts as a negative regulator of Notch signaling pathway. Shuttles between the cytoplasm and the nucleus and mediates the nuclear export of RBPJ/RBPSUH, thereby preventing the interaction between RBPJ/RBPSUH and NICD product of Notch proteins (Notch intracellular domain), leading to down-regulate Notch-mediated transcription. May play a role in neurogenesis. In Rattus norvegicus (Rat), this protein is RBPJ-interacting and tubulin-associated protein 1 (Rita1).